Consider the following 327-residue polypeptide: Nocardicin C-9' epimerase (327 aa).

K43 bears the N6-(pyridoxal phosphate)lysine mark.

It belongs to the ACC deaminase/D-cysteine desulfhydrase family. Pyridoxal 5'-phosphate serves as cofactor.

It carries out the reaction isonocardicin C = nocardicin C. The enzyme catalyses isonocardicin A = nocardicin A. Its pathway is antibiotic biosynthesis. Functionally, involved in the biosynthesis of the beta-lactam antibiotic nocardicin A. Catalyzes the interconversion of the nocardicin homoseryl side chain in both nocardicin A with isonocardicin A, and nocardicin C with isonocardicin C. This Nocardia uniformis subsp. tsuyamanensis protein is Nocardicin C-9' epimerase.